The chain runs to 454 residues: N-myc 2 proto-oncogene protein (454 aa).

Disordered stretches follow at residues 132–166 (SEKM…HSGT), 230–269 (VAAP…DEEE), and 325–374 (PSPY…VRRR). The span at 151–161 (PGAGAASPAGR) shows a compositional bias: low complexity. Residues 256–269 (ALSDEVDEEEDEEE) show a composition bias toward acidic residues. Residues 363–374 (RKSDSEDSVRRR) are compositionally biased toward basic and acidic residues. The bHLH domain occupies 371-423 (VRRRNHNILERQRRNDLRSSFTTLRDHVPELVKNEKAAKVVILKKACEYVHYL). The interval 423-444 (LQAKEHQLLMEKEKLQARQQQL) is leucine-zipper.

Efficient DNA binding requires dimerization with another bHLH protein.

The protein localises to the nucleus. The sequence is that of N-myc 2 proto-oncogene protein (N-MYC2) from Marmota monax (Woodchuck).